Here is an 831-residue protein sequence, read N- to C-terminus: Translation initiation factor IF-2 (831 aa).

The region spanning threonine 329 to lysine 499 is the tr-type G domain. The interval glycine 338–threonine 345 is G1. Glycine 338 to threonine 345 contacts GTP. Positions glycine 363 to histidine 367 are G2. The G3 stretch occupies residues aspartate 385 to glycine 388. Residues aspartate 385–histidine 389 and asparagine 439–aspartate 442 each bind GTP. Positions asparagine 439–aspartate 442 are G4. The tract at residues serine 475 to leucine 477 is G5.

Belongs to the TRAFAC class translation factor GTPase superfamily. Classic translation factor GTPase family. IF-2 subfamily.

The protein resides in the cytoplasm. In terms of biological role, one of the essential components for the initiation of protein synthesis. Protects formylmethionyl-tRNA from spontaneous hydrolysis and promotes its binding to the 30S ribosomal subunits. Also involved in the hydrolysis of GTP during the formation of the 70S ribosomal complex. The chain is Translation initiation factor IF-2 (infB) from Rickettsia prowazekii (strain Madrid E).